Reading from the N-terminus, the 475-residue chain is Arginine/ornithine antiporter (475 aa).

12 consecutive transmembrane segments (helical) span residues I10–G30, G42–L62, G74–G94, L101–F121, L157–F177, N205–A225, I238–Y258, W283–W303, P333–F353, A361–I381, L397–S417, and W451–G471.

Belongs to the amino acid-polyamine-organocation (APC) superfamily. Basic amino acid/polyamine antiporter (APA) (TC 2.A.3.2) family.

Its subcellular location is the cell membrane. It carries out the reaction L-ornithine(in) + L-arginine(out) = L-ornithine(out) + L-arginine(in). In terms of biological role, catalyzes electroneutral exchange between L-arginine and L-ornithine. In Latilactobacillus sakei (Lactobacillus sakei), this protein is Arginine/ornithine antiporter (arcD).